Here is a 345-residue protein sequence, read N- to C-terminus: Phosphoribosylformylglycinamidine cyclo-ligase (345 aa).

It belongs to the AIR synthase family.

Its subcellular location is the cytoplasm. It catalyses the reaction 2-formamido-N(1)-(5-O-phospho-beta-D-ribosyl)acetamidine + ATP = 5-amino-1-(5-phospho-beta-D-ribosyl)imidazole + ADP + phosphate + H(+). The protein operates within purine metabolism; IMP biosynthesis via de novo pathway; 5-amino-1-(5-phospho-D-ribosyl)imidazole from N(2)-formyl-N(1)-(5-phospho-D-ribosyl)glycinamide: step 2/2. The sequence is that of Phosphoribosylformylglycinamidine cyclo-ligase from Actinobacillus pleuropneumoniae serotype 5b (strain L20).